The following is a 400-amino-acid chain: Nicotinate phosphoribosyltransferase (400 aa).

Residue histidine 220 is modified to Phosphohistidine; by autocatalysis.

It belongs to the NAPRTase family. In terms of processing, transiently phosphorylated on a His residue during the reaction cycle. Phosphorylation strongly increases the affinity for substrates and increases the rate of nicotinate D-ribonucleotide production. Dephosphorylation regenerates the low-affinity form of the enzyme, leading to product release.

The catalysed reaction is nicotinate + 5-phospho-alpha-D-ribose 1-diphosphate + ATP + H2O = nicotinate beta-D-ribonucleotide + ADP + phosphate + diphosphate. It participates in cofactor biosynthesis; NAD(+) biosynthesis; nicotinate D-ribonucleotide from nicotinate: step 1/1. In terms of biological role, catalyzes the synthesis of beta-nicotinate D-ribonucleotide from nicotinate and 5-phospho-D-ribose 1-phosphate at the expense of ATP. In Salmonella typhi, this protein is Nicotinate phosphoribosyltransferase.